The following is a 186-amino-acid chain: Large ribosomal subunit protein uL5c (186 aa).

The protein belongs to the universal ribosomal protein uL5 family. As to quaternary structure, part of the 50S ribosomal subunit; contacts the 5S rRNA.

The protein resides in the plastid. It is found in the chloroplast. In terms of biological role, binds 5S rRNA, forms part of the central protuberance of the 50S subunit. The chain is Large ribosomal subunit protein uL5c (rpl5) from Chaetosphaeridium globosum (Charophycean green alga).